A 208-amino-acid polypeptide reads, in one-letter code: Large ribosomal subunit protein uL4 (208 aa).

The segment at 45-85 (RQGTHKAKTRAQVRGGGRKPYRQKGTGNARQGSTRSPLMIG) is disordered. Residues 46 to 66 (QGTHKAKTRAQVRGGGRKPYR) show a composition bias toward basic residues. A compositionally biased stretch (polar residues) spans 69 to 80 (GTGNARQGSTRS).

It belongs to the universal ribosomal protein uL4 family. Part of the 50S ribosomal subunit.

Its function is as follows. One of the primary rRNA binding proteins, this protein initially binds near the 5'-end of the 23S rRNA. It is important during the early stages of 50S assembly. It makes multiple contacts with different domains of the 23S rRNA in the assembled 50S subunit and ribosome. Functionally, forms part of the polypeptide exit tunnel. This chain is Large ribosomal subunit protein uL4, found in Chlorobium phaeobacteroides (strain DSM 266 / SMG 266 / 2430).